The chain runs to 84 residues: MYB-like transcription factor TCL1 (84 aa).

The Myb-like domain maps to 36 to 73 (TEQEEDLIFRMYRLVGDRWDLIARRVVGREAKEIERYW).

In terms of tissue distribution, expressed in inflorescences and trichomes of rosette and cauline leaves.

It is found in the nucleus. Functionally, MYB-type transcription factor involved in trichome cell specification. Acts as a negative regulator of trichome patterning and formation by direct binding to the cis-acting regulatory elements of GL1, thus suppressing the expression of GL1. The chain is MYB-like transcription factor TCL1 (TCL1) from Arabidopsis thaliana (Mouse-ear cress).